A 414-amino-acid polypeptide reads, in one-letter code: Glucose-1-phosphate adenylyltransferase (414 aa).

Alpha-D-glucose 1-phosphate-binding positions include Gly164, 181 to 182 (EK), and Ser199.

Belongs to the bacterial/plant glucose-1-phosphate adenylyltransferase family. Homotetramer.

The enzyme catalyses alpha-D-glucose 1-phosphate + ATP + H(+) = ADP-alpha-D-glucose + diphosphate. Its pathway is glycan biosynthesis; glycogen biosynthesis. Its function is as follows. Involved in the biosynthesis of ADP-glucose, a building block required for the elongation reactions to produce glycogen. Catalyzes the reaction between ATP and alpha-D-glucose 1-phosphate (G1P) to produce pyrophosphate and ADP-Glc. The polypeptide is Glucose-1-phosphate adenylyltransferase (Leifsonia xyli subsp. xyli (strain CTCB07)).